The primary structure comprises 530 residues: MSISNMTSTVWPDLQVPAIEHNHLPILTVALLTGIASAVYINVSSVQDPCKVGSIPTVKRPRLLDAYRSGVWWRIFVPRLVPYIEEGYHKYNKNDQPFRIWLGGFQAYAYVLPERYLDKIKNMPESEASFAAMANKYFHTGLPTGEVNNLVLQVASKLVNGNLATIKTLMQGEVQKALAREIGSPRQWTKINAWQVARKTTEAPGLRVVFGEELANDKTFVTGVSEFVSNITVYAFTLRYINLGPLRDFILYLVHWRHRRSLPAVLTPLNNVITERKKVRSNRHISDDEESFDCIQWALDQPVSDDCKTAEAIARRLVVISLGTIDTVAGVLVKQLTHLASHPECHEEIRAEIRECLAEDDNGWTLKSTGRMKKLESFIQESLRMSSGAISLSGMRIVTGSGFRLDDNTVLPRDSFIAIPTRNILYDPEVFPEPEKFDPFRFYKIKEDEKNAGSRSNRRDIRASWLAFGYGRQACPGRFYAINAMKTILGEILLKYDIRLAEKQAPRIDIDLDPMLAPVRSTDLEFRVRA.

The N-linked (GlcNAc...) asparagine glycan is linked to N5. The chain crosses the membrane as a helical span at residues L24–S44. N230 is a glycosylation site (N-linked (GlcNAc...) asparagine).

The protein belongs to the cytochrome P450 family. Requires heme as cofactor.

The protein localises to the membrane. It catalyses the reaction preaspterpenacid acid I + reduced [NADPH--hemoprotein reductase] + O2 = preaspterpenacid acid II + oxidized [NADPH--hemoprotein reductase] + H2O + H(+). Its pathway is secondary metabolite biosynthesis; terpenoid biosynthesis. Functionally, cytochrome P450 monooxygenase; part of the gene cluster that mediates the biosynthesis of aspterpenacids. Performs the C22-oxidative modification of the terpene synthase sttA product preaspterpenacid I to produce preaspterpenacid II. It has still to be determined how preaspterpenacid II is further modified to produce aspterpenacids. This is Cytochrome P450 monooxygenase sttB from Aspergillus terreus (strain NIH 2624 / FGSC A1156).